The sequence spans 100 residues: uncharacterized protein (100 aa).

A coiled-coil region spans residues 65–96 (PELSKNWEKLKKEIEQKHKEIQELISEFDNMF).

This is an uncharacterized protein from Acidianus filamentous virus 2 (isolate Italy/Pozzuoli) (AFV-2).